The chain runs to 865 residues: FO synthase (865 aa).

The tract at residues 1 to 21 is disordered; that stretch reads MIEGVTELATPNVPPAPPSPS. Radical SAM core domains follow at residues 76-320 and 544-785; these read ITYS…LGPD and VTYV…DNIQ. The cofG-like stretch occupies residues 77–409; it reads TYSRNVFIPL…PRIGAHVAAL (333 aa). The [4Fe-4S] cluster site is built by cysteine 90, cysteine 94, cysteine 97, cysteine 558, cysteine 562, and cysteine 565. Residues 521–854 are cofH-like; that stretch reads DGAELDAVAA…RERTTVYGRV (334 aa).

In the N-terminal section; belongs to the radical SAM superfamily. CofG family. It in the C-terminal section; belongs to the radical SAM superfamily. CofH family. The cofactor is [4Fe-4S] cluster.

The catalysed reaction is 5-amino-6-(D-ribitylamino)uracil + L-tyrosine + S-adenosyl-L-methionine = 5-amino-5-(4-hydroxybenzyl)-6-(D-ribitylimino)-5,6-dihydrouracil + 2-iminoacetate + 5'-deoxyadenosine + L-methionine + H(+). It catalyses the reaction 5-amino-5-(4-hydroxybenzyl)-6-(D-ribitylimino)-5,6-dihydrouracil + S-adenosyl-L-methionine = 7,8-didemethyl-8-hydroxy-5-deazariboflavin + 5'-deoxyadenosine + L-methionine + NH4(+) + H(+). Its pathway is cofactor biosynthesis; coenzyme F0 biosynthesis. Catalyzes the radical-mediated synthesis of 7,8-didemethyl-8-hydroxy-5-deazariboflavin (FO) from 5-amino-6-(D-ribitylamino)uracil and L-tyrosine. The chain is FO synthase (fbiC) from Nocardia farcinica (strain IFM 10152).